The primary structure comprises 473 residues: Ribulose bisphosphate carboxylase large chain (473 aa).

The substrate site is built by Asn-116 and Thr-166. The Proton acceptor role is filled by Lys-168. Residue Lys-170 coordinates substrate. 3 residues coordinate Mg(2+): Lys-194, Asp-196, and Glu-197. An N6-carboxylysine modification is found at Lys-194. His-287 acts as the Proton acceptor in catalysis. Substrate-binding residues include Arg-288, His-320, and Ser-372.

Belongs to the RuBisCO large chain family. Type I subfamily. As to quaternary structure, heterohexadecamer of 8 large chains and 8 small chains. The cofactor is Mg(2+).

It catalyses the reaction 2 (2R)-3-phosphoglycerate + 2 H(+) = D-ribulose 1,5-bisphosphate + CO2 + H2O. The enzyme catalyses D-ribulose 1,5-bisphosphate + O2 = 2-phosphoglycolate + (2R)-3-phosphoglycerate + 2 H(+). In terms of biological role, ruBisCO catalyzes two reactions: the carboxylation of D-ribulose 1,5-bisphosphate, the primary event in carbon dioxide fixation, as well as the oxidative fragmentation of the pentose substrate. Both reactions occur simultaneously and in competition at the same active site. The polypeptide is Ribulose bisphosphate carboxylase large chain (Halorhodospira halophila (strain DSM 244 / SL1) (Ectothiorhodospira halophila (strain DSM 244 / SL1))).